A 342-amino-acid polypeptide reads, in one-letter code: Guanine nucleotide-binding protein alpha-9 subunit (342 aa).

G2 carries N-myristoyl glycine lipidation. C3 is lipidated: S-palmitoyl cysteine. In terms of domain architecture, G-alpha spans 28–342 (REIKLLLLGS…IIQSILKLHY (315 aa)). Positions 31–44 (KLLLLGSGDSGKST) are G1 motif. GTP contacts are provided by residues 36–43 (GSGDSGKS), 167–173 (LRCRQRT), 192–196 (DVGGQ), 261–264 (NKND), and A316. The Mg(2+) site is built by S43 and T173. The tract at residues 165–173 (DVLRCRQRT) is G2 motif. A G3 motif region spans residues 188 to 197 (FRLIDVGGQK). The G4 motif stretch occupies residues 257–264 (VLFLNKND). The G5 motif stretch occupies residues 314-319 (TTATDT).

This sequence belongs to the G-alpha family. As to quaternary structure, g proteins are composed of 3 units; alpha, beta and gamma. The alpha chain contains the guanine nucleotide binding site.

Functionally, guanine nucleotide-binding proteins (G proteins) are involved as modulators or transducers in various transmembrane signaling systems. G alpha-9 antagonizes broad chemotactic response. It functions rapidly following receptor stimulation to negatively regulate PI3K/PTEN, adenylyl cyclase, and guanylyl cyclase pathways. The chain is Guanine nucleotide-binding protein alpha-9 subunit (gpaI) from Dictyostelium discoideum (Social amoeba).